A 474-amino-acid chain; its full sequence is Peroxisome proliferator-activated receptor alpha (474 aa).

Residues 106 to 180 (NLECRVCSDK…VGMSHNAIRF (75 aa)) constitute a DNA-binding region (nuclear receptor). 2 NR C4-type zinc fingers span residues 109 to 129 (CRVC…CEGC) and 146 to 168 (CERM…FEKC). Residues 245-472 (FVIHDMETLC…HPLLQEIYRD (228 aa)) enclose the NR LBD domain.

This sequence belongs to the nuclear hormone receptor family. NR1 subfamily. In terms of assembly, heterodimer with the retinoid X receptor. In terms of tissue distribution, ubiquitous.

The protein localises to the nucleus. Ligand-activated transcription factor. Key regulator of lipid metabolism. Activated by lipids. Receptor for peroxisome proliferators such as hypolipidemic drugs and fatty acids. Once activated by a ligand, the receptor binds to promoter elements of target genes. Regulates the peroxisomal beta-oxidation pathway of fatty acids. This chain is Peroxisome proliferator-activated receptor alpha (ppara), found in Xenopus laevis (African clawed frog).